Here is a 288-residue protein sequence, read N- to C-terminus: ATP synthase gamma chain (288 aa).

Belongs to the ATPase gamma chain family. As to quaternary structure, F-type ATPases have 2 components, CF(1) - the catalytic core - and CF(0) - the membrane proton channel. CF(1) has five subunits: alpha(3), beta(3), gamma(1), delta(1), epsilon(1). CF(0) has three main subunits: a, b and c.

It localises to the cell inner membrane. Its function is as follows. Produces ATP from ADP in the presence of a proton gradient across the membrane. The gamma chain is believed to be important in regulating ATPase activity and the flow of protons through the CF(0) complex. In Actinobacillus pleuropneumoniae serotype 5b (strain L20), this protein is ATP synthase gamma chain.